A 132-amino-acid polypeptide reads, in one-letter code: Large ribosomal subunit protein uL14 (132 aa).

This sequence belongs to the universal ribosomal protein uL14 family. As to quaternary structure, part of the 50S ribosomal subunit. Forms a cluster with proteins L3 and L24e, part of which may contact the 16S rRNA in 2 intersubunit bridges.

In terms of biological role, binds to 23S rRNA. Forms part of two intersubunit bridges in the 70S ribosome. The protein is Large ribosomal subunit protein uL14 of Methanococcus maripaludis (strain DSM 14266 / JCM 13030 / NBRC 101832 / S2 / LL).